The following is a 382-amino-acid chain: ATP phosphoribosyltransferase regulatory subunit (382 aa).

Belongs to the class-II aminoacyl-tRNA synthetase family. HisZ subfamily. In terms of assembly, heteromultimer composed of HisG and HisZ subunits.

It localises to the cytoplasm. It participates in amino-acid biosynthesis; L-histidine biosynthesis; L-histidine from 5-phospho-alpha-D-ribose 1-diphosphate: step 1/9. Required for the first step of histidine biosynthesis. May allow the feedback regulation of ATP phosphoribosyltransferase activity by histidine. This is ATP phosphoribosyltransferase regulatory subunit from Albidiferax ferrireducens (strain ATCC BAA-621 / DSM 15236 / T118) (Rhodoferax ferrireducens).